A 394-amino-acid polypeptide reads, in one-letter code: Regulatory protein E2 (394 aa).

Positions 1 to 201 (METLAKRLDA…QVIVSPASIS (201 aa)) are transactivation domain. Residues 226–235 (NTTPTPTTIT) are compositionally biased toward low complexity. Residues 226 to 309 (NTTPTPTTIT…RNPCGNQTTP (84 aa)) form a disordered region. The DNA-binding domain stretch occupies residues 307-394 (TTPVIHLQGD…IGYMSMLQFM (88 aa)).

Belongs to the papillomaviridae E2 protein family. In terms of assembly, binds DNA as homodimer. Interacts with protein E1; this interaction greatly increases E1 DNA-binding activity. Interacts with protein L1; this interaction enhances E2-dependent replication and transcription activation. Interacts with protein L2; this interaction inhibits E2 transcriptional activity but not DNA replication function E2. Interacts with protein E7; this interaction inhibits E7 oncogenic activity. Interacts with host TAF1; this interaction modulates E2-dependent transcriptional regulation. Interacts with host BRD4; this interaction mediates E2 transcriptional activation function. Additionally, the interaction with host BRD4 on mitotic chromosomes mediates tethering of the viral genome. Interacts with host TOPBP1; this interaction is required for optimal viral DNA replication. Phosphorylated.

The protein resides in the host nucleus. In terms of biological role, plays a role in the initiation of viral DNA replication. A dimer of E2 interacts with a dimer of E1 in order to improve specificity of E1 DNA binding activity. Once the complex recognizes and binds DNA at specific sites, the E2 dimer is removed from DNA. E2 also regulates viral transcription through binding to the E2RE response element (5'-ACCNNNNNNGGT-3') present in multiple copies in the regulatory regions of the viral genome. Activates or represses transcription depending on E2RE's position with regards to proximal promoter elements including the TATA-box. Repression occurs by sterically hindering the assembly of the transcription initiation complex. In Homo sapiens (Human), this protein is Regulatory protein E2.